The following is a 310-amino-acid chain: S-adenosylmethionine-dependent nucleotide dehydratase (310 aa).

The Radical SAM core domain occupies 3-221; sequence PAIPPTINLH…VERHRKVESS (219 aa). Residues Cys17, Cys21, and Cys24 each coordinate [4Fe-4S] cluster.

It belongs to the radical SAM superfamily. Viperin family. Requires [4Fe-4S] cluster as cofactor.

It carries out the reaction GTP + AH2 + S-adenosyl-L-methionine = 3'-deoxy-3',4'-didehydro-GTP + 5'-deoxyadenosine + L-methionine + A + H2O + H(+). Expression of pVip15 in E.coli (strain MG1655) confers resistance to phage T7; prevents culture collapse upon infection. Catalyzes the conversion of guanosine triphosphate (GTP) to 3'-deoxy-3',4'-didehydro-GTP (ddhGTP), probably via a SAM-dependent radical mechanism. The modified nucleotide represses transcription from T7 RNA polymerase-directed genes (possibly by acting as chain terminators), strongly suggesting these nucleotides block viral polymerase transcription. The polypeptide is S-adenosylmethionine-dependent nucleotide dehydratase (Coraliomargarita akajimensis (strain DSM 45221 / IAM 15411 / JCM 23193 / KCTC 12865 / 04OKA010-24)).